A 343-amino-acid chain; its full sequence is Heat-inducible transcription repressor HrcA (343 aa).

It belongs to the HrcA family.

In terms of biological role, negative regulator of class I heat shock genes (grpE-dnaK-dnaJ and groELS operons). Prevents heat-shock induction of these operons. The chain is Heat-inducible transcription repressor HrcA from Caldanaerobacter subterraneus subsp. tengcongensis (strain DSM 15242 / JCM 11007 / NBRC 100824 / MB4) (Thermoanaerobacter tengcongensis).